We begin with the raw amino-acid sequence, 455 residues long: UPF0210 protein Teth514_2074 (455 aa).

This sequence belongs to the UPF0210 family. Homodimer.

The polypeptide is UPF0210 protein Teth514_2074 (Thermoanaerobacter sp. (strain X514)).